The sequence spans 324 residues: Adenine deaminase (324 aa).

Positions 8, 10, and 186 each coordinate Zn(2+). Catalysis depends on Glu-189, which acts as the Proton donor. Asp-267 provides a ligand contact to Zn(2+). Residue Asp-268 participates in substrate binding.

It belongs to the metallo-dependent hydrolases superfamily. Adenosine and AMP deaminases family. Adenine deaminase type 2 subfamily. Requires Zn(2+) as cofactor.

The catalysed reaction is adenine + H2O + H(+) = hypoxanthine + NH4(+). Catalyzes the hydrolytic deamination of adenine to hypoxanthine. Plays an important role in the purine salvage pathway and in nitrogen catabolism. This is Adenine deaminase from Mesorhizobium japonicum (strain LMG 29417 / CECT 9101 / MAFF 303099) (Mesorhizobium loti (strain MAFF 303099)).